The primary structure comprises 307 residues: MSENQQALNHVVSMEDLTVDQVMKLIKRGIEFKNGAQLPYEDHPIVSNLFFEDSTRTHKSFEVAEIKLGLERLDFDVKTSSVNKGETLYDTILTLSALGVDVCVIRHPEVDYYRELIASPTITTSIINGGDGSGQHPSQSLLDLMTIYEEFGHFEGLKVAIAGDLDHSRVAKSNMQILKRLGAELFFAGPEEWRSQEFADYGKFVTIDEIIDQVDVMMFLRVQHERHDSGAVFSKEDYHAQHGLTQERYDRLKETAILMHPAPINRDVEIADHLVEAPKSRIVQQMTNGVFVRMAILESVLASRNAN.

Arginine 56 and threonine 57 together coordinate carbamoyl phosphate. Lysine 84 contributes to the L-aspartate binding site. Carbamoyl phosphate-binding residues include arginine 106, histidine 136, and glutamine 139. Positions 169 and 221 each coordinate L-aspartate. The carbamoyl phosphate site is built by alanine 262 and proline 263.

This sequence belongs to the aspartate/ornithine carbamoyltransferase superfamily. ATCase family. In terms of assembly, heterododecamer (2C3:3R2) of six catalytic PyrB chains organized as two trimers (C3), and six regulatory PyrI chains organized as three dimers (R2).

The enzyme catalyses carbamoyl phosphate + L-aspartate = N-carbamoyl-L-aspartate + phosphate + H(+). Its pathway is pyrimidine metabolism; UMP biosynthesis via de novo pathway; (S)-dihydroorotate from bicarbonate: step 2/3. Catalyzes the condensation of carbamoyl phosphate and aspartate to form carbamoyl aspartate and inorganic phosphate, the committed step in the de novo pyrimidine nucleotide biosynthesis pathway. This is Aspartate carbamoyltransferase catalytic subunit from Streptococcus pneumoniae (strain 70585).